The following is a 433-amino-acid chain: Forkhead box protein A2-B (433 aa).

Positions 147 to 241 (KPPYSYISLI…ENGCYLRRQK (95 aa)) form a DNA-binding region, fork-head. The segment covering 247-260 (KKPSLREGGGKKLS) has biased composition (basic and acidic residues). 2 disordered regions span residues 247–337 (KKPS…QSHL) and 407–433 (SGLEPSPISSDTSYYQGGYSRPIMNSS). A compositionally biased stretch (low complexity) spans 261 to 282 (EGASSVGSVGNSSSERSVGNES). Positions 292-302 (EQKRSLVDMKS) are enriched in basic and acidic residues. A compositionally biased stretch (low complexity) spans 315–331 (ASQAQHLLSQHHSVLSH). Over residues 407–421 (SGLEPSPISSDTSYY) the composition is skewed to polar residues.

The protein resides in the nucleus. Acts as a transcriptional activator during early development, limiting the extent of mesoderm formation in the gastrula. Binds to DNA via the target sequence 5'-GT[AC]AACA-3', with 5'-GTAAACA-3' being the preferred binding site. This is Forkhead box protein A2-B (foxa2-b) from Xenopus laevis (African clawed frog).